The chain runs to 143 residues: Cofilin/actin-depolymerizing factor homolog 2 (143 aa).

Residues 4–141 (GVKVSDECVY…FEDELRTIIL (138 aa)) form the ADF-H domain.

This sequence belongs to the actin-binding proteins ADF family. As to quaternary structure, interacts with monomeric actin, does not bind to actin polymers.

Its subcellular location is the cytoplasm. It localises to the cytoskeleton. Its function is as follows. Not involved in actin polymerisation, instead functions to stimulate nucleotide exchange on monomeric actin and influence turnover of the small amount of cytosolic actin microfilaments. Essential for erythrocytic schizogony. The polypeptide is Cofilin/actin-depolymerizing factor homolog 2 (Plasmodium falciparum (isolate 3D7)).